Reading from the N-terminus, the 187-residue chain is Peptidyl-tRNA hydrolase (187 aa).

Residue tyrosine 15 participates in tRNA binding. The Proton acceptor role is filled by histidine 20. Phenylalanine 64, asparagine 66, and asparagine 112 together coordinate tRNA.

The protein belongs to the PTH family. In terms of assembly, monomer.

It localises to the cytoplasm. It carries out the reaction an N-acyl-L-alpha-aminoacyl-tRNA + H2O = an N-acyl-L-amino acid + a tRNA + H(+). Its function is as follows. Hydrolyzes ribosome-free peptidyl-tRNAs (with 1 or more amino acids incorporated), which drop off the ribosome during protein synthesis, or as a result of ribosome stalling. Catalyzes the release of premature peptidyl moieties from peptidyl-tRNA molecules trapped in stalled 50S ribosomal subunits, and thus maintains levels of free tRNAs and 50S ribosomes. This is Peptidyl-tRNA hydrolase from Parabacteroides distasonis (strain ATCC 8503 / DSM 20701 / CIP 104284 / JCM 5825 / NCTC 11152).